Reading from the N-terminus, the 536-residue chain is Nuclear hormone receptor family member nhr-7 (536 aa).

The nuclear receptor DNA-binding region spans 6-82 (NRICAVCGDT…VGMNPDYVRP (77 aa)). NR C4-type zinc fingers lie at residues 9-29 (CAVCGDTPAKIHYGVLACFGC) and 46-70 (CRFEKNCEVTKFERNACRYCRFRKC). The region spanning 155–378 (ADRSLARKTG…PFHKILTDII (224 aa)) is the NR LBD domain. A disordered region spans residues 427–465 (SPCQISAPPPPQQQYTDYSQMPSTSSYPANSSPFQSPYR). Positions 439-465 (QQYTDYSQMPSTSSYPANSSPFQSPYR) are enriched in polar residues.

It belongs to the nuclear hormone receptor family.

Its subcellular location is the nucleus. In terms of biological role, orphan nuclear receptor. The protein is Nuclear hormone receptor family member nhr-7 (nhr-7) of Caenorhabditis elegans.